The following is a 423-amino-acid chain: Putative competence-damage inducible protein (423 aa).

It belongs to the CinA family.

This is Putative competence-damage inducible protein from Streptococcus equi subsp. zooepidemicus (strain H70).